Reading from the N-terminus, the 330-residue chain is Malate dehydrogenase (330 aa).

Residue 12-18 (GAAGQIG) coordinates NAD(+). Substrate contacts are provided by Arg93 and Arg99. Residues Asn106, Gln113, and 130–132 (VGN) each bind NAD(+). The substrate site is built by Asn132 and Arg166. The active-site Proton acceptor is the His191.

Belongs to the LDH/MDH superfamily. MDH type 2 family.

It carries out the reaction (S)-malate + NAD(+) = oxaloacetate + NADH + H(+). In terms of biological role, catalyzes the reversible oxidation of malate to oxaloacetate. The sequence is that of Malate dehydrogenase from Azoarcus sp. (strain BH72).